A 439-amino-acid polypeptide reads, in one-letter code: Adenylosuccinate synthetase (439 aa).

GTP is bound by residues 14–20 and 42–44; these read GDEGKGK and GHT. Asp-15 acts as the Proton acceptor in catalysis. Asp-15 and Gly-42 together coordinate Mg(2+). IMP contacts are provided by residues 15–18, 40–43, Thr-130, Arg-144, Gln-225, Thr-240, and Arg-304; these read DEGK and NAGH. The active-site Proton donor is His-43. 300 to 306 is a substrate binding site; it reads TTTGRRR. Residues Arg-306, 332 to 334, and 414 to 416 contribute to the GTP site; these read KLD and SLG.

It belongs to the adenylosuccinate synthetase family. In terms of assembly, homodimer. Requires Mg(2+) as cofactor.

Its subcellular location is the cytoplasm. The enzyme catalyses IMP + L-aspartate + GTP = N(6)-(1,2-dicarboxyethyl)-AMP + GDP + phosphate + 2 H(+). The protein operates within purine metabolism; AMP biosynthesis via de novo pathway; AMP from IMP: step 1/2. Plays an important role in the de novo pathway of purine nucleotide biosynthesis. Catalyzes the first committed step in the biosynthesis of AMP from IMP. The protein is Adenylosuccinate synthetase of Prochlorococcus marinus (strain MIT 9303).